The sequence spans 91 residues: DNA-directed RNA polymerase subunit Rpo5 (91 aa).

This sequence belongs to the archaeal Rpo5/eukaryotic RPB5 RNA polymerase subunit family. Part of the RNA polymerase complex.

It localises to the cytoplasm. The enzyme catalyses RNA(n) + a ribonucleoside 5'-triphosphate = RNA(n+1) + diphosphate. In terms of biological role, DNA-dependent RNA polymerase (RNAP) catalyzes the transcription of DNA into RNA using the four ribonucleoside triphosphates as substrates. The chain is DNA-directed RNA polymerase subunit Rpo5 from Staphylothermus marinus (strain ATCC 43588 / DSM 3639 / JCM 9404 / F1).